A 235-amino-acid polypeptide reads, in one-letter code: MRRVFGAKKNTEPPPSIQDASDRINKRGDSVEDKIKKLDVELCKYKEQLKKTRPGPAQEAVKARAMRVLKQKKMYEGQRDMLYNQTFNLDQVSFAAEGLKDAQQTMTALKSANKELKGMMKTVKIQDIDNLQDEMMDLMDVSSEIQESLGRSYNIPDGLDEDDLMGELDALEADMGNETEADGMPSYLQPDTETDYDSELNLPAAPTGHNGAPHGRAQAEDEFGLPAVPRASLRG.

Residues 1–29 are disordered; that stretch reads MRRVFGAKKNTEPPPSIQDASDRINKRGD. Positions 20–29 are enriched in basic and acidic residues; sequence ASDRINKRGD. Residues 99 to 148 adopt a coiled-coil conformation; it reads LKDAQQTMTALKSANKELKGMMKTVKIQDIDNLQDEMMDLMDVSSEIQES. Residues 175–235 form a disordered region; that stretch reads MGNETEADGM…PAVPRASLRG (61 aa).

The protein belongs to the SNF7 family. In terms of assembly, interacts with SKD1/VPS4 and LIP5. Interacts with VPS2.2.

The protein resides in the endosome. It localises to the multivesicular body membrane. In terms of biological role, probable peripherally associated component of the endosomal sorting required for transport complex III (ESCRT-III) which is involved in multivesicular bodies (MVBs) formation and sorting of endosomal cargo proteins into MVBs. This chain is Vacuolar protein sorting-associated protein 60.1, found in Arabidopsis thaliana (Mouse-ear cress).